The sequence spans 211 residues: Uracil phosphoribosyltransferase (211 aa).

5-phospho-alpha-D-ribose 1-diphosphate is bound by residues Arg78, Arg103, and 130–138 (DPMLATGNS). Residues Ile193 and 198–200 (GDA) each bind uracil. Residue Asp199 participates in 5-phospho-alpha-D-ribose 1-diphosphate binding.

This sequence belongs to the UPRTase family. Mg(2+) serves as cofactor.

The enzyme catalyses UMP + diphosphate = 5-phospho-alpha-D-ribose 1-diphosphate + uracil. It functions in the pathway pyrimidine metabolism; UMP biosynthesis via salvage pathway; UMP from uracil: step 1/1. With respect to regulation, allosterically activated by GTP. Catalyzes the conversion of uracil and 5-phospho-alpha-D-ribose 1-diphosphate (PRPP) to UMP and diphosphate. This Acinetobacter baumannii (strain AB307-0294) protein is Uracil phosphoribosyltransferase.